A 151-amino-acid chain; its full sequence is Transcriptional repressor NrdR (151 aa).

A zinc finger lies at 3 to 34; sequence CPYCGSLDNKVIDSRLSRDDTETRRRRECLEC. Residues 49-139 form the ATP-cone domain; that stretch reads LMIVKKDGRR…VYREFKDVHD (91 aa).

This sequence belongs to the NrdR family. It depends on Zn(2+) as a cofactor.

Functionally, negatively regulates transcription of bacterial ribonucleotide reductase nrd genes and operons by binding to NrdR-boxes. In Desulfosudis oleivorans (strain DSM 6200 / JCM 39069 / Hxd3) (Desulfococcus oleovorans), this protein is Transcriptional repressor NrdR.